Reading from the N-terminus, the 111-residue chain is V-type proton ATPase subunit G 2 (111 aa).

This sequence belongs to the V-ATPase G subunit family. V-ATPase is a heteromultimeric enzyme composed of a peripheral catalytic V1 complex (components A to H) attached to an integral membrane V0 proton pore complex (components: a, c, c', c'' and d).

Functionally, catalytic subunit of the peripheral V1 complex of vacuolar ATPase (V-ATPase). V-ATPase is responsible for acidifying a variety of intracellular compartments in eukaryotic cells. The chain is V-type proton ATPase subunit G 2 (VATG2) from Nicotiana tabacum (Common tobacco).